The chain runs to 74 residues: Mu-conotoxin-like T3.1 (74 aa).

Residues 1–19 (MSKLGVLLTICLLLFPLTA) form the signal peptide. A propeptide spanning residues 20-74 (LPMDGDEPADRPAERMQDNISSEQHPLFEERHGCCKGPEGCSSRECRPQHCCGRR) is cleaved from the precursor. 3 cysteine pairs are disulfide-bonded: Cys-53-Cys-65, Cys-54-Cys-70, and Cys-60-Cys-71. Pro-57 carries the 4-hydroxyproline modification. 4-carboxyglutamate is present on residues Glu-58 and Glu-64. The residue at position 67 (Pro-67) is a 4-hydroxyproline. Residue Cys-71 is modified to Cysteine amide.

The protein belongs to the conotoxin M superfamily. Expressed by the venom duct.

It localises to the secreted. Functionally, mu-conotoxins block voltage-gated sodium channels (Nav). In vitro, this synthetic peptide displays a low blocking effect in mouse extensor digitorum longus muscles (IC(50)=616 nM). The polypeptide is Mu-conotoxin-like T3.1 (Conus tulipa (Fish-hunting cone snail)).